Here is a 229-residue protein sequence, read N- to C-terminus: MNQWEELQESVGFDFKDVELLKQAFTHSSYVNEHRRENVKDNERLEFLGDAVLELTVSDYLFNKYPDMAEGHMTKMRAAIVCEPSLVEFAEAVHFSKYVRLGKGEEKAGGRTRPALLADVFESFIGALYLDNGIDKVVTFLERVIFPKIDAGAYLQTVDYKTQLQEIVQRDRDVLIEYDILGETGPAHNKAFDAQVIVNGQVLGKGSGRTKKQAEQSAAQFAINQLTHR.

The region spanning 4–133 (WEELQESVGF…FIGALYLDNG (130 aa)) is the RNase III domain. Position 46 (E46) interacts with Mg(2+). Residue D50 is part of the active site. Mg(2+) is bound by residues D119 and E122. E122 is a catalytic residue. The region spanning 159 to 228 (DYKTQLQEIV…AQFAINQLTH (70 aa)) is the DRBM domain.

The protein belongs to the ribonuclease III family. As to quaternary structure, homodimer. It depends on Mg(2+) as a cofactor.

The protein localises to the cytoplasm. It carries out the reaction Endonucleolytic cleavage to 5'-phosphomonoester.. In terms of biological role, digests double-stranded RNA. Involved in the processing of primary rRNA transcript to yield the immediate precursors to the large and small rRNAs (23S and 16S). Processes some mRNAs, and tRNAs when they are encoded in the rRNA operon. Processes pre-crRNA and tracrRNA of type II CRISPR loci if present in the organism. In Listeria monocytogenes serotype 4a (strain HCC23), this protein is Ribonuclease 3.